Here is a 321-residue protein sequence, read N- to C-terminus: Probable transaldolase (321 aa).

K133 serves as the catalytic Schiff-base intermediate with substrate.

This sequence belongs to the transaldolase family. Type 1 subfamily. Homodimer.

The protein resides in the cytoplasm. The catalysed reaction is D-sedoheptulose 7-phosphate + D-glyceraldehyde 3-phosphate = D-erythrose 4-phosphate + beta-D-fructose 6-phosphate. It participates in carbohydrate degradation; pentose phosphate pathway; D-glyceraldehyde 3-phosphate and beta-D-fructose 6-phosphate from D-ribose 5-phosphate and D-xylulose 5-phosphate (non-oxidative stage): step 2/3. Functionally, transaldolase is important for the balance of metabolites in the pentose-phosphate pathway. This Dictyostelium discoideum (Social amoeba) protein is Probable transaldolase (tal).